We begin with the raw amino-acid sequence, 404 residues long: Acyl-[acyl-carrier-protein] desaturase 7, chloroplastic (404 aa).

A chloroplast-targeting transit peptide spans 1–39 (MAASATTSTLAVTMFGYPNRNCHLKPPATATLRFWRSAA). 6 residues coordinate Fe cation: Glu138, Glu176, His179, Glu229, Glu262, and His265.

It belongs to the fatty acid desaturase type 2 family. In terms of assembly, homodimer. It depends on Fe(2+) as a cofactor.

The protein resides in the plastid. Its subcellular location is the chloroplast. It participates in lipid metabolism; fatty acid metabolism. Introduces a cis double bond in the acyl chain of an acyl-[acyl-carrier protein]. In Oryza sativa subsp. indica (Rice), this protein is Acyl-[acyl-carrier-protein] desaturase 7, chloroplastic.